Consider the following 520-residue polypeptide: Glutamate--cysteine ligase (520 aa).

Belongs to the glutamate--cysteine ligase type 1 family. Type 1 subfamily.

It carries out the reaction L-cysteine + L-glutamate + ATP = gamma-L-glutamyl-L-cysteine + ADP + phosphate + H(+). Its pathway is sulfur metabolism; glutathione biosynthesis; glutathione from L-cysteine and L-glutamate: step 1/2. In Leptospira interrogans serogroup Icterohaemorrhagiae serovar copenhageni (strain Fiocruz L1-130), this protein is Glutamate--cysteine ligase.